We begin with the raw amino-acid sequence, 142 residues long: Putative pre-16S rRNA nuclease (142 aa).

This sequence belongs to the YqgF nuclease family.

The protein resides in the cytoplasm. Functionally, could be a nuclease involved in processing of the 5'-end of pre-16S rRNA. The protein is Putative pre-16S rRNA nuclease of Azotobacter vinelandii (strain DJ / ATCC BAA-1303).